The following is a 393-amino-acid chain: Probable acetyl-CoA acyltransferase (393 aa).

Cysteine 88 functions as the Acyl-thioester intermediate in the catalytic mechanism. Catalysis depends on proton acceptor residues histidine 349 and cysteine 378.

This sequence belongs to the thiolase-like superfamily. Thiolase family.

It localises to the cytoplasm. The enzyme catalyses 2 acetyl-CoA = acetoacetyl-CoA + CoA. The protein is Probable acetyl-CoA acyltransferase of Staphylococcus aureus (strain Mu50 / ATCC 700699).